The sequence spans 158 residues: Small ribosomal subunit protein uS9 (158 aa).

Polar residues predominate over residues 1-20 (MSETMQSLDQLSALKTTQPD). The segment at 1 to 29 (MSETMQSLDQLSALKTTQPDAPTYTKKVD) is disordered.

The protein belongs to the universal ribosomal protein uS9 family.

The sequence is that of Small ribosomal subunit protein uS9 from Rhodopseudomonas palustris (strain BisB5).